A 511-amino-acid chain; its full sequence is GMP synthase [glutamine-hydrolyzing] (511 aa).

The region spanning 5 to 195 (IVIVLDFGGQ…LFNICGCKGD (191 aa)) is the Glutamine amidotransferase type-1 domain. Residue Cys-82 is the Nucleophile of the active site. Catalysis depends on residues His-169 and Glu-171. Positions 196-386 (WKTSSFIEER…LGIPEKIVKR (191 aa)) constitute a GMPS ATP-PPase domain. 223–229 (SGGVDSS) provides a ligand contact to ATP.

In terms of assembly, homodimer.

It catalyses the reaction XMP + L-glutamine + ATP + H2O = GMP + L-glutamate + AMP + diphosphate + 2 H(+). It participates in purine metabolism; GMP biosynthesis; GMP from XMP (L-Gln route): step 1/1. Its function is as follows. Catalyzes the synthesis of GMP from XMP. This chain is GMP synthase [glutamine-hydrolyzing], found in Caldicellulosiruptor saccharolyticus (strain ATCC 43494 / DSM 8903 / Tp8T 6331).